Consider the following 326-residue polypeptide: Glycerol-3-phosphate dehydrogenase [NAD(P)+] (326 aa).

NADPH-binding residues include Ser10, Phe11, Arg31, and Lys108. Sn-glycerol 3-phosphate is bound by residues Lys108, Gly136, and Ser138. Ala140 provides a ligand contact to NADPH. Sn-glycerol 3-phosphate contacts are provided by Lys191, Asp246, Ser256, Arg257, and Asn258. The Proton acceptor role is filled by Lys191. Arg257 provides a ligand contact to NADPH. Ile281 and Glu283 together coordinate NADPH.

This sequence belongs to the NAD-dependent glycerol-3-phosphate dehydrogenase family.

The protein resides in the cytoplasm. It catalyses the reaction sn-glycerol 3-phosphate + NAD(+) = dihydroxyacetone phosphate + NADH + H(+). It carries out the reaction sn-glycerol 3-phosphate + NADP(+) = dihydroxyacetone phosphate + NADPH + H(+). Its pathway is membrane lipid metabolism; glycerophospholipid metabolism. Its function is as follows. Catalyzes the reduction of the glycolytic intermediate dihydroxyacetone phosphate (DHAP) to sn-glycerol 3-phosphate (G3P), the key precursor for phospholipid synthesis. The polypeptide is Glycerol-3-phosphate dehydrogenase [NAD(P)+] (Ehrlichia chaffeensis (strain ATCC CRL-10679 / Arkansas)).